The primary structure comprises 543 residues: Carboxypeptidase Y homolog A (543 aa).

Residues 1 to 17 form the signal peptide; the sequence is MRVAASALLAGAASAAV. A propeptide spanning residues 18–128 is cleaved from the precursor; that stretch reads APQQQILKFP…KLEQFDLRVK (111 aa). 5 cysteine pairs are disulfide-bonded: cysteine 182-cysteine 421, cysteine 316-cysteine 330, cysteine 340-cysteine 363, cysteine 347-cysteine 356, and cysteine 385-cysteine 391. Asparagine 213 is a glycosylation site (N-linked (GlcNAc...) asparagine). Residue serine 269 is part of the active site. Aspartate 460 is a catalytic residue. An N-linked (GlcNAc...) asparagine glycan is attached at asparagine 508. Histidine 519 is a catalytic residue.

It belongs to the peptidase S10 family.

The protein localises to the vacuole. The enzyme catalyses Release of a C-terminal amino acid with broad specificity.. Vacuolar carboxypeptidase involved in degradation of small peptides. Digests preferentially peptides containing an aliphatic or hydrophobic residue in P1' position, as well as methionine, leucine or phenylalanine in P1 position of ester substrate. This is Carboxypeptidase Y homolog A (CPYA) from Phaeosphaeria nodorum (strain SN15 / ATCC MYA-4574 / FGSC 10173) (Glume blotch fungus).